The following is a 260-amino-acid chain: Phosphate import ATP-binding protein PstB 1 (260 aa).

The ABC transporter domain occupies 13-255; it reads ISARDLNVHY…PQHPLTQGYI (243 aa). 45-52 provides a ligand contact to ATP; sequence GPSGCGKS.

It belongs to the ABC transporter superfamily. Phosphate importer (TC 3.A.1.7) family. The complex is composed of two ATP-binding proteins (PstB), two transmembrane proteins (PstC and PstA) and a solute-binding protein (PstS).

It localises to the cell inner membrane. The enzyme catalyses phosphate(out) + ATP + H2O = ADP + 2 phosphate(in) + H(+). Its function is as follows. Part of the ABC transporter complex PstSACB involved in phosphate import. Responsible for energy coupling to the transport system. In Paramagnetospirillum magneticum (strain ATCC 700264 / AMB-1) (Magnetospirillum magneticum), this protein is Phosphate import ATP-binding protein PstB 1.